A 320-amino-acid polypeptide reads, in one-letter code: Chitinase 3 (320 aa).

The signal sequence occupies residues 1 to 18; sequence MRALALAVVAMAVVAVRG. A Chitin-binding type-1 domain is found at 19–59; that stretch reads EQCGSQAGGALCPNCLCCSQYGWCGSTSDYCGAGCQSQCSG. 8 disulfide bridges follow: Cys21–Cys36, Cys30–Cys42, Cys33–Cys61, Cys35–Cys49, Cys53–Cys57, Cys97–Cys159, Cys172–Cys180, and Cys279–Cys311. Glu141 functions as the Proton donor in the catalytic mechanism.

This sequence belongs to the glycosyl hydrolase 19 family. Chitinase class I subfamily. Expressed at low levels in roots, leaves, sheaths and meristems.

It carries out the reaction Random endo-hydrolysis of N-acetyl-beta-D-glucosaminide (1-&gt;4)-beta-linkages in chitin and chitodextrins.. Hydrolyzes chitin and plays a role in defense against fungal pathogens containing chitin. Inhibits the growth of T.reesei fungus on plate assay. The chain is Chitinase 3 (Cht3) from Oryza sativa subsp. japonica (Rice).